We begin with the raw amino-acid sequence, 476 residues long: Bifunctional protein HldE (476 aa).

Positions 1 to 319 (MKVSLPAFEK…EALALHHGES (319 aa)) are ribokinase. 195–198 (NMSE) contacts ATP. Residue aspartate 264 is part of the active site. Residues 345–476 (MTNGCFDILH…AIIQNIMAKQ (132 aa)) form a cytidylyltransferase region.

It in the N-terminal section; belongs to the carbohydrate kinase PfkB family. In the C-terminal section; belongs to the cytidylyltransferase family. Homodimer.

It carries out the reaction D-glycero-beta-D-manno-heptose 7-phosphate + ATP = D-glycero-beta-D-manno-heptose 1,7-bisphosphate + ADP + H(+). The catalysed reaction is D-glycero-beta-D-manno-heptose 1-phosphate + ATP + H(+) = ADP-D-glycero-beta-D-manno-heptose + diphosphate. Its pathway is nucleotide-sugar biosynthesis; ADP-L-glycero-beta-D-manno-heptose biosynthesis; ADP-L-glycero-beta-D-manno-heptose from D-glycero-beta-D-manno-heptose 7-phosphate: step 1/4. It functions in the pathway nucleotide-sugar biosynthesis; ADP-L-glycero-beta-D-manno-heptose biosynthesis; ADP-L-glycero-beta-D-manno-heptose from D-glycero-beta-D-manno-heptose 7-phosphate: step 3/4. Catalyzes the phosphorylation of D-glycero-D-manno-heptose 7-phosphate at the C-1 position to selectively form D-glycero-beta-D-manno-heptose-1,7-bisphosphate. Functionally, catalyzes the ADP transfer from ATP to D-glycero-beta-D-manno-heptose 1-phosphate, yielding ADP-D-glycero-beta-D-manno-heptose. This is Bifunctional protein HldE from Shewanella sp. (strain MR-4).